The sequence spans 149 residues: MDVSTQRRIAAAVLDCGIDRVWVDPENLEKVKMAITKDDIRLLINDGIIVKKQEKGISSARKKEVQEQKRKGKRKGPGSRRGAKGARTPKKEKWMNTIRPLRTLLKELRENEKIERSSYRKLYRMAKGGAFRSRNHMKLYMKEHGILAE.

Over residues 55–69 (KGISSARKKEVQEQK) the composition is skewed to basic and acidic residues. The tract at residues 55 to 93 (KGISSARKKEVQEQKRKGKRKGPGSRRGAKGARTPKKEK) is disordered. The span at 70–88 (RKGKRKGPGSRRGAKGART) shows a compositional bias: basic residues.

This sequence belongs to the eukaryotic ribosomal protein eL19 family. As to quaternary structure, part of the 50S ribosomal subunit.

Its function is as follows. Binds to the 23S rRNA. This Methanococcus vannielii protein is Large ribosomal subunit protein eL19.